Reading from the N-terminus, the 233-residue chain is Probable translation initiation factor, mitochondrial (233 aa).

The transit peptide at 1–39 directs the protein to the mitochondrion; the sequence is MNSYLQFPHRKLFIQFSYSLTSVFRKCQSRTFMNSQFAS.

This sequence belongs to the IF-3 family.

Its subcellular location is the mitochondrion. Its function is as follows. May be involved in mitochondrial translation initiation. The protein is Probable translation initiation factor, mitochondrial of Schizosaccharomyces pombe (strain 972 / ATCC 24843) (Fission yeast).